Here is a 361-residue protein sequence, read N- to C-terminus: MGNESSTLVDEKTPPSVLEARTVEAVAKYVKEKPVRRVVVMVGAGISTAAGIPDFRSPDTGIYANLVHLDLPDPEAVFDISFFRQNPKPFYALARELAPGQYRPTLAHSFVKLLYDKGKLLKHFTQNIDCLERLAGVPGDMIIEAHGSFATQRCIECKTAYPDDLMKEAIAKGEVPNCAECQGLVKPDIVFFGEALPSAFFDNRTLPETADLCIVMGTSLSVQPFASLPSFVADGVPRVLINRERVGGLGSRPDDVLILDDCDNGVRKLARALGWEDELERLWEEANPNQKSREEELATPRTREERLENEISRLTAEIDKTLKISDAYQKRVRERLEGEPLSSPESNGTGLAHVFPHLARR.

One can recognise a Deacetylase sirtuin-type domain in the interval 16-276; sequence SVLEARTVEA…RKLARALGWE (261 aa). Residues 43–63 and 126–129 contribute to the NAD(+) site; these read GAGI…TGIY and QNID. His-146 functions as the Proton acceptor in the catalytic mechanism. Residues Cys-154, Cys-157, Cys-178, and Cys-181 each coordinate Zn(2+). NAD(+)-binding positions include 217 to 219, 242 to 244, and Cys-262; these read GTS and NRE. Residues 294–328 are a coiled coil; it reads EEELATPRTREERLENEISRLTAEIDKTLKISDAY. A disordered region spans residues 335–361; the sequence is RLEGEPLSSPESNGTGLAHVFPHLARR.

It belongs to the sirtuin family. Class I subfamily. The cofactor is Zn(2+).

It is found in the cytoplasm. The protein localises to the nucleus. The enzyme catalyses N(6)-acetyl-L-lysyl-[protein] + NAD(+) + H2O = 2''-O-acetyl-ADP-D-ribose + nicotinamide + L-lysyl-[protein]. Functionally, NAD-dependent histone deacetylase, which could function in telomeric silencing, cell cycle progression and chromosome stability. The chain is NAD-dependent protein deacetylase hst2-1 from Emericella nidulans (strain FGSC A4 / ATCC 38163 / CBS 112.46 / NRRL 194 / M139) (Aspergillus nidulans).